Reading from the N-terminus, the 276-residue chain is Diaminopimelate epimerase (276 aa).

Substrate-binding residues include N13, Q46, and N66. Residue C75 is the Proton donor of the active site. Residues 76-77, N159, N192, and 210-211 each bind substrate; these read GN and ER. C219 functions as the Proton acceptor in the catalytic mechanism. 220 to 221 lines the substrate pocket; it reads GS.

It belongs to the diaminopimelate epimerase family. Homodimer.

It is found in the cytoplasm. The catalysed reaction is (2S,6S)-2,6-diaminopimelate = meso-2,6-diaminopimelate. Its pathway is amino-acid biosynthesis; L-lysine biosynthesis via DAP pathway; DL-2,6-diaminopimelate from LL-2,6-diaminopimelate: step 1/1. Functionally, catalyzes the stereoinversion of LL-2,6-diaminopimelate (L,L-DAP) to meso-diaminopimelate (meso-DAP), a precursor of L-lysine and an essential component of the bacterial peptidoglycan. This Vibrio parahaemolyticus serotype O3:K6 (strain RIMD 2210633) protein is Diaminopimelate epimerase.